Consider the following 857-residue polypeptide: Facilitated trehalose transporter Tret1-1 (857 aa).

2 disordered regions span residues 1–28 and 62–203; these read MSGR…KLKE and DPFL…KATS. The Cytoplasmic segment spans residues 1-392; that stretch reads MSGRDSRGAG…VYRPTTNPIY (392 aa). Positions 69–81 are enriched in polar residues; sequence VSPQRHPQNTVRT. The span at 134-143 shows a compositional bias: basic and acidic residues; that stretch reads EIREHRDRQQ. Residues 171-181 are compositionally biased toward polar residues; the sequence is GNSNTNSNKAA. S248, S249, S250, S320, and S322 each carry phosphoserine. Positions 327–346 are disordered; the sequence is LTSRQHFQQQRSISTDSRKS. Positions 330–341 are enriched in polar residues; it reads RQHFQQQRSIST. Residues 393 to 413 traverse the membrane as a helical segment; that stretch reads IWTQVLAALSVSLGSLVVGFV. Residues 414 to 440 are Extracellular-facing; it reads SAYTSPALVSMTDRNITSFEVTQDAGS. An N-linked (GlcNAc...) asparagine glycan is attached at N428. The chain crosses the membrane as a helical span at residues 441–461; that stretch reads WVGGIMPLAGLAGGIAGGPLI. The Cytoplasmic segment spans residues 462–473; that stretch reads EYLGRRNTILAT. A helical transmembrane segment spans residues 474–494; the sequence is AVPFIVSSLLIACAVNVAMVL. Residues 495–497 are Extracellular-facing; that stretch reads CGR. A helical membrane pass occupies residues 498–518; sequence FLAGFCVGIASLSLPVYLGET. Over 519 to 528 the chain is Cytoplasmic; it reads VQPEVRGTLG. A helical transmembrane segment spans residues 529-549; the sequence is LLPTAFGNIGILLCFVAGSFM. N-linked (GlcNAc...) asparagine glycosylation occurs at N550. Residues 550–552 lie on the Extracellular side of the membrane; sequence NWS. A helical membrane pass occupies residues 553–573; the sequence is MLAFLGAALPVPFLILMFLIP. Over 574–636 the chain is Cytoplasmic; that stretch reads ETPRWFVGRG…ELFKRINLKP (63 aa). Residues 637–657 form a helical membrane-spanning segment; sequence LSISLGLMFFQQFSGINAVIF. Over 658–673 the chain is Extracellular; sequence YTVQIFKDAGSTIDSN. A helical transmembrane segment spans residues 674–694; it reads LCTIIVGIVNFFATFMGILLI. The Cytoplasmic portion of the chain corresponds to 695–700; it reads DRLGRK. The chain crosses the membrane as a helical span at residues 701–721; that stretch reads ILLYISDIAMILTLSILGGFF. At 722 to 740 the chain is on the extracellular side; sequence YCKAHGPDVSHLGWLPLTC. A helical transmembrane segment spans residues 741–761; the sequence is FVIYILGFSLGFGPIPWLMMG. Over 762 to 770 the chain is Cytoplasmic; the sequence is EILPAKIRG. The helical transmembrane segment at 771–791 threads the bilayer; it reads PAASVVTAFNWFCTFVVTKTF. At 792 to 801 the chain is on the extracellular side; sequence QDLTGAMGAH. The chain crosses the membrane as a helical span at residues 802–822; it reads GAFWLFGAICFVGLFFVIIYV. Topologically, residues 823 to 857 are cytoplasmic; sequence PETQGKTLEDIERKMMGRVRRMSSVANIKPLSFNM. Residues S845 and S846 each carry the phosphoserine modification.

It belongs to the major facilitator superfamily. Sugar transporter (TC 2.A.1.1) family. Trehalose transporter subfamily.

The protein resides in the cell membrane. Low-capacity facilitative transporter for trehalose. Does not transport maltose, sucrose or lactose. Mediates the bidirectional transfer of trehalose. Responsible for the transport of trehalose synthesized in the fat body and the incorporation of trehalose into other tissues that require a carbon source, thereby regulating trehalose levels in the hemolymph. The chain is Facilitated trehalose transporter Tret1-1 from Drosophila simulans (Fruit fly).